A 173-amino-acid chain; its full sequence is NADH-ubiquinone oxidoreductase chain 6 (173 aa).

The next 5 helical transmembrane spans lie at 1-21 (MVYF…GVAS), 28-48 (AALG…SYGG), 53-73 (LILF…TAAL), 87-107 (VLMY…YFLV), and 139-159 (LGGW…FVVL).

It belongs to the complex I subunit 6 family.

Its subcellular location is the mitochondrion membrane. The enzyme catalyses a ubiquinone + NADH + 5 H(+)(in) = a ubiquinol + NAD(+) + 4 H(+)(out). Functionally, core subunit of the mitochondrial membrane respiratory chain NADH dehydrogenase (Complex I) that is believed to belong to the minimal assembly required for catalysis. Complex I functions in the transfer of electrons from NADH to the respiratory chain. The immediate electron acceptor for the enzyme is believed to be ubiquinone. The sequence is that of NADH-ubiquinone oxidoreductase chain 6 (MT-ND6) from Scyliorhinus canicula (Small-spotted catshark).